The sequence spans 520 residues: Interferon lambda receptor 1 (520 aa).

The signal sequence occupies residues 1 to 20 (MAGPERWGPLLLCLLQAAPG). At 21–228 (RPRLAPPQNV…LLEVPEANWA (208 aa)) the chain is on the extracellular side. The 101-residue stretch at 26-126 (PPQNVTLLSQ…LDYLFEVEPA (101 aa)) folds into the Fibronectin type-III domain. 2 N-linked (GlcNAc...) asparagine glycosylation sites follow: Asn29 and Asn36. Disulfide bonds link Cys74–Cys82 and Cys86–Cys150. Residues Asn142 and Asn169 are each glycosylated (N-linked (GlcNAc...) asparagine). The cysteines at positions 195 and 217 are disulfide-linked. Residues 229–249 (FLVLPSLLILLLVIAAGGVIW) traverse the membrane as a helical segment. Residues 250 to 520 (KTLMGNPWFQ…GRTLGHYMAR (271 aa)) are Cytoplasmic-facing. 2 disordered regions span residues 302-439 (VRPT…FLEE) and 477-520 (ESSP…YMAR). Residues 323-336 (AEDEEEEDEEDTED) are compositionally biased toward acidic residues. The span at 380 to 392 (SSAWDSSDRSWAS) shows a compositional bias: low complexity. Positions 479 to 495 (SPEEEEEARESEIEDSD) are enriched in acidic residues.

This sequence belongs to the type II cytokine receptor family. As to quaternary structure, heterodimer with IL10RB. In terms of processing, ubiquitinated by FBXO45-containing E3 ligase leading to proteasomal degradation. Widely expressed.

It is found in the membrane. In terms of biological role, the IFNLR1/IL10RB dimer is a receptor for the cytokine ligands IFNL2 and IFNL3 and mediates their antiviral activity. The ligand/receptor complex stimulate the activation of the JAK/STAT signaling pathway leading to the expression of IFN-stimulated genes (ISG), which contribute to the antiviral state. Determines the cell type specificity of the lambda interferon action. Shows a more restricted pattern of expression in the epithelial tissues thereby limiting responses to lambda interferons primarily to epithelial cells of the respiratory, gastrointestinal, and reproductive tracts. Seems not to be essential for early virus-activated host defense in vaginal infection, but plays an important role in Toll-like receptor (TLR)-induced antiviral defense. Plays a significant role in the antiviral immune defense in the intestinal epithelium. This Homo sapiens (Human) protein is Interferon lambda receptor 1 (IFNLR1).